Consider the following 221-residue polypeptide: ATP-dependent dethiobiotin synthetase BioD (221 aa).

11–16 (GVGKTY) lines the ATP pocket. Mg(2+) is bound at residue threonine 15. Lysine 36 is a catalytic residue. Residue threonine 40 coordinates substrate. Residues aspartate 48 and 107 to 110 (EGAG) each bind ATP. Aspartate 48 and glutamate 107 together coordinate Mg(2+).

The protein belongs to the dethiobiotin synthetase family. As to quaternary structure, homodimer. Requires Mg(2+) as cofactor.

It is found in the cytoplasm. The enzyme catalyses (7R,8S)-7,8-diammoniononanoate + CO2 + ATP = (4R,5S)-dethiobiotin + ADP + phosphate + 3 H(+). The protein operates within cofactor biosynthesis; biotin biosynthesis; biotin from 7,8-diaminononanoate: step 1/2. Its function is as follows. Catalyzes a mechanistically unusual reaction, the ATP-dependent insertion of CO2 between the N7 and N8 nitrogen atoms of 7,8-diaminopelargonic acid (DAPA, also called 7,8-diammoniononanoate) to form a ureido ring. In Hydrogenobaculum sp. (strain Y04AAS1), this protein is ATP-dependent dethiobiotin synthetase BioD.